The sequence spans 950 residues: MLYSSRGDPEGQPLLLSLLILAMWVVGSGQLHYSVPEEAEHGTFVGRIAQDLGLELAELVPRLFQLDSKGRGDLLEVNLQNGILFVNSRIDREELCGRSAECSIHLEVIVDRPLQVFHVDVEVKDINDNPPVFPATQKNLFIAESRPLDSRFPLEGASDADIGENALLTYRLSPNEYFFLDVPTSNQQVKPLGLVLRKLLDREETPELHLLLTATDGGKPELTGTVQLLITVLDNNDNAPVFDRTLYTVKLPENVSIGTLVIHPNASDLDEGLNGDIIYSFSSDVSPDIKSKFHMDPLSGAITVIGHMDFEESRAHKIPVEAVDKGFPPLAGHCTLLVEVVDVNDNAPQLTIKTLSVPVKEDAQLGTVIALISVIDLDADANGQVTCSLTPHVPFKLVSTYKNYYSLVLDRALDRESVSAYELVVTARDGGSPSLWATARVSVEVADVNDNAPAFAQSEYTVFVKENNPPGCHIFTVSARDADAQENALVSYSLVERRLGERSLSSYVSVHAESGKVYALQPLDHEELELLQFQVSARDAGVPPLGSNVTLQVFVLDENDNAPALLTPRMRGTDGAVSEMVLRSVGAGVVVGKVRAVDADSGYNAWLSYELQPETASASIPFRVGLYTGEISTTRALDETDAPRQRLLVLVKDHGEPALTATATVLVSLVESGQAPKSSSRASVGATGPEVTLVDVNVYLIIAICAVSSLLVLTLLLYTVLRCSAMPTEGECAPGKPTLVCSSAVGSWSYSQQRRQRVCSGEGKQKTDLMAFSPGLSPCAGSTERTGEPSASSDSTGKPRQPNPDWRYSASLRAGMHSSVHLEEAGILRAGPGGPDQQWPTVSSATPEPEAGEVSPPVGAGVNSNSWTFKYGPGNPKQSGPGELPDKFIIPGSPAIISIRQEPTNSQIDKSDFITFGKKEETKKKKKKKKGNKTQEKKEKGNSTTDNSDQ.

Residues 1 to 29 (MLYSSRGDPEGQPLLLSLLILAMWVVGSG) form the signal peptide. Cadherin domains follow at residues 30–133 (QLHY…PPVF), 134–242 (PATQ…APVF), 243–350 (DRTL…APQL), 351–455 (TIKT…APAF), 456–565 (AQSE…APAL), and 588–678 (GVVV…APKS). The Extracellular portion of the chain corresponds to 30 to 697 (QLHYSVPEEA…GPEVTLVDVN (668 aa)). 2 N-linked (GlcNAc...) asparagine glycosylation sites follow: Asn-254 and Asn-265. Asn-548 is a glycosylation site (N-linked (GlcNAc...) asparagine). Residues 698 to 718 (VYLIIAICAVSSLLVLTLLLY) traverse the membrane as a helical segment. The Cytoplasmic segment spans residues 719–950 (TVLRCSAMPT…GNSTTDNSDQ (232 aa)). The stretch at 734–737 (PGKP) is one PXXP 1 repeat. The segment at 734-894 (PGKPTLVCSS…PDKFIIPGSP (161 aa)) is 5 X 4 AA repeats of P-X-X-P. Disordered regions lie at residues 770-808 (MAFS…DWRY), 827-856 (ILRA…EVSP), and 871-950 (YGPG…NSDQ). A compositionally biased stretch (polar residues) spans 789–798 (PSASSDSTGK). PXXP repeat units lie at residues 799 to 802 (PRQP), 832 to 835 (PGGP), 873 to 876 (PGNP), and 891 to 894 (PGSP). A compositionally biased stretch (basic and acidic residues) spans 909 to 923 (DKSDFITFGKKEETK).

It is found in the cell membrane. Its function is as follows. Potential calcium-dependent cell-adhesion protein. May be involved in the establishment and maintenance of specific neuronal connections in the brain. In Homo sapiens (Human), this protein is Protocadherin alpha-9 (PCDHA9).